A 345-amino-acid chain; its full sequence is NADH-quinone oxidoreductase subunit H (345 aa).

A run of 8 helical transmembrane segments spans residues 13–33, 84–104, 115–135, 161–181, 190–210, 248–268, 277–297, and 309–329; these read VIIL…LLFL, FILA…VIPF, VAIL…IMGG, IGLI…GDIV, LFNW…ISCL, YIAI…GWLS, PLWM…VKAI, and LGWK…AFAA.

The protein belongs to the complex I subunit 1 family. NDH-1 is composed of 14 different subunits. Subunits NuoA, H, J, K, L, M, N constitute the membrane sector of the complex.

The protein resides in the cell inner membrane. The enzyme catalyses a quinone + NADH + 5 H(+)(in) = a quinol + NAD(+) + 4 H(+)(out). NDH-1 shuttles electrons from NADH, via FMN and iron-sulfur (Fe-S) centers, to quinones in the respiratory chain. The immediate electron acceptor for the enzyme in this species is believed to be ubiquinone. Couples the redox reaction to proton translocation (for every two electrons transferred, four hydrogen ions are translocated across the cytoplasmic membrane), and thus conserves the redox energy in a proton gradient. This subunit may bind ubiquinone. This chain is NADH-quinone oxidoreductase subunit H, found in Ruegeria sp. (strain TM1040) (Silicibacter sp.).